The sequence spans 382 residues: Flap endonuclease 1 (382 aa).

The segment at 1 to 105 (MGIKGLNAII…HELTKRSSRR (105 aa)) is N-domain. A Mg(2+)-binding site is contributed by D34. The DNA site is built by R47 and R71. Mg(2+) is bound by residues D87, E156, E158, D177, and D179. An I-domain region spans residues 120–251 (EKMKQERRLV…VTALKLIKTH (132 aa)). Residue E156 participates in DNA binding. 2 residues coordinate DNA: G229 and D231. Residue D231 participates in Mg(2+) binding. The interval 339–347 (IQGRLDGFF) is interaction with PCNA. The disordered stretch occupies residues 358–382 (AAAAKRAQENKKLNKNKNKVTKGRR). The segment covering 370-382 (LNKNKNKVTKGRR) has biased composition (basic residues).

Belongs to the XPG/RAD2 endonuclease family. FEN1 subfamily. Interacts with PCNA. Three molecules of RAD27 bind to one PCNA trimer with each molecule binding to one PCNA monomer. PCNA stimulates the nuclease activity without altering cleavage specificity. Requires Mg(2+) as cofactor. In terms of processing, phosphorylated. Phosphorylation upon DNA damage induces relocalization to the nuclear plasma.

The protein localises to the nucleus. It is found in the nucleolus. It localises to the nucleoplasm. The protein resides in the mitochondrion. Functionally, structure-specific nuclease with 5'-flap endonuclease and 5'-3' exonuclease activities involved in DNA replication and repair. During DNA replication, cleaves the 5'-overhanging flap structure that is generated by displacement synthesis when DNA polymerase encounters the 5'-end of a downstream Okazaki fragment. It enters the flap from the 5'-end and then tracks to cleave the flap base, leaving a nick for ligation. Also involved in the long patch base excision repair (LP-BER) pathway, by cleaving within the apurinic/apyrimidinic (AP) site-terminated flap. Acts as a genome stabilization factor that prevents flaps from equilibrating into structures that lead to duplications and deletions. Also possesses 5'-3' exonuclease activity on nicked or gapped double-stranded DNA, and exhibits RNase H activity. Also involved in replication and repair of rDNA and in repairing mitochondrial DNA. The sequence is that of Flap endonuclease 1 from Saccharomyces cerevisiae (strain RM11-1a) (Baker's yeast).